A 370-amino-acid polypeptide reads, in one-letter code: Chaperone protein DnaJ (370 aa).

Positions 7 to 73 (DYYEILGVPR…QKRAMYDRFG (67 aa)) constitute a J domain. A CR-type zinc finger spans residues 144–226 (GTEIPIEYER…CGGSGRVLRR (83 aa)). Zn(2+) contacts are provided by Cys-157, Cys-160, Cys-174, Cys-177, Cys-200, Cys-203, Cys-214, and Cys-217. CXXCXGXG motif repeat units follow at residues 157-164 (CPRCGGTG), 174-181 (CPRCGGTG), 200-207 (CDECGGTG), and 214-221 (CHECGGSG).

The protein belongs to the DnaJ family. Homodimer. Requires Zn(2+) as cofactor.

It is found in the cytoplasm. Its function is as follows. Participates actively in the response to hyperosmotic and heat shock by preventing the aggregation of stress-denatured proteins and by disaggregating proteins, also in an autonomous, DnaK-independent fashion. Unfolded proteins bind initially to DnaJ; upon interaction with the DnaJ-bound protein, DnaK hydrolyzes its bound ATP, resulting in the formation of a stable complex. GrpE releases ADP from DnaK; ATP binding to DnaK triggers the release of the substrate protein, thus completing the reaction cycle. Several rounds of ATP-dependent interactions between DnaJ, DnaK and GrpE are required for fully efficient folding. Also involved, together with DnaK and GrpE, in the DNA replication of plasmids through activation of initiation proteins. In Thermotoga neapolitana (strain ATCC 49049 / DSM 4359 / NBRC 107923 / NS-E), this protein is Chaperone protein DnaJ.